The chain runs to 198 residues: dTTP/UTP pyrophosphatase (198 aa).

The active-site Proton acceptor is Asp75.

This sequence belongs to the Maf family. YhdE subfamily. A divalent metal cation is required as a cofactor.

The protein localises to the cytoplasm. It carries out the reaction dTTP + H2O = dTMP + diphosphate + H(+). The catalysed reaction is UTP + H2O = UMP + diphosphate + H(+). Its function is as follows. Nucleoside triphosphate pyrophosphatase that hydrolyzes dTTP and UTP. May have a dual role in cell division arrest and in preventing the incorporation of modified nucleotides into cellular nucleic acids. The protein is dTTP/UTP pyrophosphatase of Wolbachia pipientis wMel.